The chain runs to 249 residues: 3-deoxy-manno-octulosonate cytidylyltransferase (249 aa).

This sequence belongs to the KdsB family.

It is found in the cytoplasm. The catalysed reaction is 3-deoxy-alpha-D-manno-oct-2-ulosonate + CTP = CMP-3-deoxy-beta-D-manno-octulosonate + diphosphate. It participates in nucleotide-sugar biosynthesis; CMP-3-deoxy-D-manno-octulosonate biosynthesis; CMP-3-deoxy-D-manno-octulosonate from 3-deoxy-D-manno-octulosonate and CTP: step 1/1. Its pathway is bacterial outer membrane biogenesis; lipopolysaccharide biosynthesis. Functionally, activates KDO (a required 8-carbon sugar) for incorporation into bacterial lipopolysaccharide in Gram-negative bacteria. This Coxiella burnetii (strain RSA 331 / Henzerling II) protein is 3-deoxy-manno-octulosonate cytidylyltransferase.